The primary structure comprises 254 residues: rRNA N-glycosylase sapovaccarin-S1 (254 aa).

This sequence belongs to the ribosome-inactivating protein family. Type 1 RIP subfamily. In terms of tissue distribution, expressed in seeds; most abundant in the perisperm.

The catalysed reaction is Endohydrolysis of the N-glycosidic bond at one specific adenosine on the 28S rRNA.. Exhibits N-glycosylase activity. Catalyzes the release of one adenine from a ribosome. Acts as a ribosome-inactivating protein and inhibits protein synthesis in a rabbit-reticulocyte lysate system and in various cell lines (in vitro). Induces cell death in Huh-7 liver cells. May contribute to the protection against plant pests and predators or play a role in regulating the death of plant cells. This Gypsophila vaccaria (Cow soapwort) protein is rRNA N-glycosylase sapovaccarin-S1.